The primary structure comprises 130 residues: Glycine cleavage system H protein (130 aa).

One can recognise a Lipoyl-binding domain in the interval 24–106; sequence IYSVGITEHA…YADGWLFRIR (83 aa). K65 carries the N6-lipoyllysine modification.

This sequence belongs to the GcvH family. As to quaternary structure, the glycine cleavage system is composed of four proteins: P, T, L and H. (R)-lipoate serves as cofactor.

Functionally, the glycine cleavage system catalyzes the degradation of glycine. The H protein shuttles the methylamine group of glycine from the P protein to the T protein. In Pectobacterium carotovorum subsp. carotovorum (strain PC1), this protein is Glycine cleavage system H protein.